We begin with the raw amino-acid sequence, 368 residues long: snRNA-activating protein complex subunit 1 (368 aa).

Residues 1–168 (MGTPPGLQTD…EEFKDPSDRV (168 aa)) form an SNAPC3-binding region. Positions 164 to 268 (PSDRVMKLIT…AESLAKIKSK (105 aa)) are SNAPC4-binding. Disordered stretches follow at residues 224–257 (QQWH…ERCE) and 275–368 (QASK…RRKH). Residues 238–257 (KTNDGEEKMEGNSQETERCE) are compositionally biased toward basic and acidic residues. 2 positions are modified to phosphoserine: Ser-289 and Ser-290.

As to quaternary structure, part of the SNAPc complex composed of 5 subunits: SNAPC1, SNAPC2, SNAPC3, SNAPC4 and SNAPC5. SNAPC1 interacts with SNAPC3, SNAPC4 and TBP.

The protein localises to the nucleus. Part of the SNAPc complex required for the transcription of both RNA polymerase II and III small-nuclear RNA genes. Binds to the proximal sequence element (PSE), a non-TATA-box basal promoter element common to these 2 types of genes. Recruits TBP and BRF2 to the U6 snRNA TATA box. In Homo sapiens (Human), this protein is snRNA-activating protein complex subunit 1 (SNAPC1).